The chain runs to 279 residues: Acetyl-coenzyme A carboxylase carboxyl transferase subunit beta (279 aa).

The region spanning 27–279 is the CoA carboxyltransferase N-terminal domain; that stretch reads LFLACPYCGT…IVKLHHRTEI (253 aa). Zn(2+) is bound by residues C31, C34, C49, and C52. The C4-type zinc finger occupies 31–52; sequence CPYCGTQMYNKQLGDYRVCAKC.

Belongs to the AccD/PCCB family. Acetyl-CoA carboxylase is a heterohexamer composed of biotin carboxyl carrier protein (AccB), biotin carboxylase (AccC) and two subunits each of ACCase subunit alpha (AccA) and ACCase subunit beta (AccD). Requires Zn(2+) as cofactor.

It localises to the cytoplasm. The enzyme catalyses N(6)-carboxybiotinyl-L-lysyl-[protein] + acetyl-CoA = N(6)-biotinyl-L-lysyl-[protein] + malonyl-CoA. It functions in the pathway lipid metabolism; malonyl-CoA biosynthesis; malonyl-CoA from acetyl-CoA: step 1/1. In terms of biological role, component of the acetyl coenzyme A carboxylase (ACC) complex. Biotin carboxylase (BC) catalyzes the carboxylation of biotin on its carrier protein (BCCP) and then the CO(2) group is transferred by the transcarboxylase to acetyl-CoA to form malonyl-CoA. The sequence is that of Acetyl-coenzyme A carboxylase carboxyl transferase subunit beta from Leuconostoc citreum (strain KM20).